We begin with the raw amino-acid sequence, 58 residues long: Small ribosomal subunit protein bS21 (58 aa).

The segment at 39–58 (EKPSVKRKRKSEVARKRKKF) is disordered. Basic residues predominate over residues 43 to 58 (VKRKRKSEVARKRKKF).

It belongs to the bacterial ribosomal protein bS21 family.

The protein is Small ribosomal subunit protein bS21 of Streptococcus pneumoniae (strain ATCC BAA-255 / R6).